Consider the following 633-residue polypeptide: MSLQPQAETLSFEAEVKQLLHLVAHSLYSNKEIFLRELISNSSDAADKLRYQALSDAALYENDADLKIWIDFDKDNRTITIRDNGIGMSREEVIENLGTIAKSGTRAFRELLAEKKAEDSQLIGQFGVGFYSAFIVADRVVVRTRRAGMKADQGVEWESTGEGEYTLKNIDKPTRGTEVVLHLKESEEEFLDSLRLRAIITKYSDHILLPIVMKKIKTSGADDEDKNETPEEEVVNRANALWVLPKDKIKDEEYKELYKHIAHDFEDPLAWVHNKVEGKLEYTTLLYIPARAPFDLWNREGQRGLKLYVKRIFIMDDAEHFMPMYLRFVKGIVDSNDLPLNISRELLQSNEVINKIKAGCVKRILSLLEDLAKNDKEKYASFWKAFGQVLKEGPAEDFANRDRIANLLRFASTHNDTDEQNVSLQDYISRMKPEQNKIYYIVADTYTSAKNSPLLEVFRKKDIEVLLMSDRVDEWLVAHLNEFEGKSLQSIAKGTLDLGDLEKEEKVETEKFEKDFDELLKQFKEVLGEKIKDVRITHRLTDSPTCVVFDENEMSGHLQRLLIQTGQDFMQAKPILEINPSHPLILRVKNESDKTRFNRWADLLLNQALLAEGEQLKDPASFVKGLNELLLDS.

Residues 1–344 (MSLQPQAETL…SNDLPLNISR (344 aa)) are a; substrate-binding. Residues 345–560 (ELLQSNEVIN…ENEMSGHLQR (216 aa)) are b. A c region spans residues 561 to 633 (LLIQTGQDFM…KGLNELLLDS (73 aa)).

It belongs to the heat shock protein 90 family. Homodimer.

The protein resides in the cytoplasm. Its function is as follows. Molecular chaperone. Has ATPase activity. This Coxiella burnetii (strain RSA 331 / Henzerling II) protein is Chaperone protein HtpG.